We begin with the raw amino-acid sequence, 154 residues long: Ribosomal RNA large subunit methyltransferase H (154 aa).

Position 103 (Gly-103) interacts with S-adenosyl-L-methionine.

The protein belongs to the RNA methyltransferase RlmH family. In terms of assembly, homodimer.

The protein localises to the cytoplasm. It catalyses the reaction pseudouridine(1915) in 23S rRNA + S-adenosyl-L-methionine = N(3)-methylpseudouridine(1915) in 23S rRNA + S-adenosyl-L-homocysteine + H(+). In terms of biological role, specifically methylates the pseudouridine at position 1915 (m3Psi1915) in 23S rRNA. The sequence is that of Ribosomal RNA large subunit methyltransferase H from Gemmatimonas aurantiaca (strain DSM 14586 / JCM 11422 / NBRC 100505 / T-27).